The primary structure comprises 312 residues: ADP-L-glycero-D-manno-heptose-6-epimerase (312 aa).

NADP(+)-binding positions include 10–11 (FI), 31–32 (DN), Lys-38, Lys-53, 75–79 (EGACS), and Asn-92. Residue Tyr-140 is the Proton acceptor of the active site. Residue Lys-144 participates in NADP(+) binding. Asn-169 lines the substrate pocket. The NADP(+) site is built by Val-170 and Lys-178. The active-site Proton acceptor is Lys-178. Substrate contacts are provided by residues Ser-180, His-187, 201–204 (FEGS), Arg-209, and Tyr-274.

Belongs to the NAD(P)-dependent epimerase/dehydratase family. HldD subfamily. Homopentamer. Requires NADP(+) as cofactor.

It carries out the reaction ADP-D-glycero-beta-D-manno-heptose = ADP-L-glycero-beta-D-manno-heptose. The protein operates within nucleotide-sugar biosynthesis; ADP-L-glycero-beta-D-manno-heptose biosynthesis; ADP-L-glycero-beta-D-manno-heptose from D-glycero-beta-D-manno-heptose 7-phosphate: step 4/4. Its function is as follows. Catalyzes the interconversion between ADP-D-glycero-beta-D-manno-heptose and ADP-L-glycero-beta-D-manno-heptose via an epimerization at carbon 6 of the heptose. The protein is ADP-L-glycero-D-manno-heptose-6-epimerase of Proteus mirabilis (strain HI4320).